We begin with the raw amino-acid sequence, 316 residues long: Retinol dehydrogenase 12 (316 aa).

Gly-46–Gly-52 lines the NADP(+) pocket. Residue Ser-175 participates in substrate binding. Tyr-200 serves as the catalytic Proton acceptor.

Belongs to the short-chain dehydrogenases/reductases (SDR) family. As to expression, expressed in the inner segments of the photoreceptor in retina.

It catalyses the reaction all-trans-retinol + NADP(+) = all-trans-retinal + NADPH + H(+). The catalysed reaction is 11-cis-retinol + NADP(+) = 11-cis-retinal + NADPH + H(+). It carries out the reaction 9-cis-retinol + NADP(+) = 9-cis-retinal + NADPH + H(+). The enzyme catalyses a 4-hydroxynonen-1-ol + NADP(+) = a 4-hydroxynonenal + NADPH + H(+). It catalyses the reaction (E)-non-2-en-1-ol + NADP(+) = (E)-non-2-enal + NADPH + H(+). The catalysed reaction is (Z)-non-6-en-1-ol + NADP(+) = (Z)-non-6-enal + NADPH + H(+). It carries out the reaction nonan-1-ol + NADP(+) = nonanal + NADPH + H(+). The protein operates within cofactor metabolism; retinol metabolism. Its function is as follows. Retinoids dehydrogenase/reductase with a clear preference for NADP. Displays high activity towards 9-cis, 11-cis and all-trans-retinal. Shows very weak activity toward 13-cis-retinol. Also exhibits activity, albeit with lower affinity than for retinaldehydes, towards lipid peroxidation products (C9 aldehydes) such as 4-hydroxynonenal and trans-2-nonenal. Plays an important function in photoreceptor cells to detoxify 4-hydroxynonenal and potentially other toxic aldehyde products resulting from lipid peroxidation. Has no dehydrogenase activity towards steroids. The chain is Retinol dehydrogenase 12 (Rdh12) from Mus musculus (Mouse).